The chain runs to 224 residues: Peroxynitrite isomerase 2 (224 aa).

Residues 71–77 (GVWRGEG) carry the GXWXGXG motif. Lys-187 and His-214 together coordinate heme b.

This sequence belongs to the nitrobindin family. In terms of assembly, homodimer. Heme b is required as a cofactor.

It catalyses the reaction peroxynitrite = nitrate. The protein operates within nitrogen metabolism. Its function is as follows. Heme-binding protein able to scavenge peroxynitrite and to protect free L-tyrosine against peroxynitrite-mediated nitration, by acting as a peroxynitrite isomerase that converts peroxynitrite to nitrate. Therefore, this protein likely plays a role in peroxynitrite sensing and in the detoxification of reactive nitrogen and oxygen species (RNS and ROS, respectively). Is able to bind nitric oxide (NO) in vitro, but may act as a sensor of peroxynitrite levels in vivo. This is Peroxynitrite isomerase 2 from Mycobacterium sp. (strain JLS).